The primary structure comprises 676 residues: Ion-translocating oxidoreductase complex subunit C (676 aa).

2 4Fe-4S ferredoxin-type domains span residues 369–397 (GEPQ…QQLY) and 407–436 (KATT…VQYF). Residues cysteine 377, cysteine 380, cysteine 383, cysteine 387, cysteine 416, cysteine 419, cysteine 422, and cysteine 426 each coordinate [4Fe-4S] cluster. The segment at 600–652 (ARKLEQQQANAEPEQQVDPRKAAVEAAIARAKARKLEQQQANAEPEEQVDPRK) is disordered. The segment covering 605 to 615 (QQQANAEPEQQ) has biased composition (low complexity).

Belongs to the 4Fe4S bacterial-type ferredoxin family. RnfC subfamily. As to quaternary structure, the complex is composed of six subunits: RsxA, RsxB, RsxC, RsxD, RsxE and RsxG. It depends on [4Fe-4S] cluster as a cofactor.

The protein resides in the cell inner membrane. In terms of biological role, part of a membrane-bound complex that couples electron transfer with translocation of ions across the membrane. Required to maintain the reduced state of SoxR. The polypeptide is Ion-translocating oxidoreductase complex subunit C (Escherichia coli (strain SMS-3-5 / SECEC)).